Here is a 391-residue protein sequence, read N- to C-terminus: GTPase Obg (391 aa).

The 159-residue stretch at 1 to 159 folds into the Obg domain; that stretch reads MKFIDEALIR…RDLLLELMLL (159 aa). In terms of domain architecture, OBG-type G spans 160–333; that stretch reads ADVGMLGLPN…LTRDIMDFIE (174 aa). GTP-binding positions include 166–173, 191–195, 213–216, 283–286, and 314–316; these read GLPNAGKS, FTTLV, DIPG, NKID, and SAA. Positions 173 and 193 each coordinate Mg(2+).

It belongs to the TRAFAC class OBG-HflX-like GTPase superfamily. OBG GTPase family. Monomer. The cofactor is Mg(2+).

The protein resides in the cytoplasm. Functionally, an essential GTPase which binds GTP, GDP and possibly (p)ppGpp with moderate affinity, with high nucleotide exchange rates and a fairly low GTP hydrolysis rate. Plays a role in control of the cell cycle, stress response, ribosome biogenesis and in those bacteria that undergo differentiation, in morphogenesis control. The protein is GTPase Obg of Actinobacillus pleuropneumoniae serotype 5b (strain L20).